The primary structure comprises 339 residues: Large ribosomal subunit protein uL11m (339 aa).

The protein belongs to the universal ribosomal protein uL11 family.

The protein localises to the mitochondrion. This is Large ribosomal subunit protein uL11m (RPL11) from Acanthamoeba castellanii (Amoeba).